The primary structure comprises 287 residues: Oxaloacetate decarboxylase (287 aa).

A substrate-binding site is contributed by Ser-50. Residue Asp-88 coordinates Mg(2+). Residues Arg-159 and His-235 each coordinate substrate.

The protein belongs to the isocitrate lyase/PEP mutase superfamily. Oxaloacetate decarboxylase family. As to quaternary structure, homotetramer; dimer of dimers. Mg(2+) serves as cofactor.

It catalyses the reaction oxaloacetate + H(+) = pyruvate + CO2. Functionally, catalyzes the decarboxylation of oxaloacetate into pyruvate. Seems to play a role in maintaining cellular concentrations of bicarbonate and pyruvate. The polypeptide is Oxaloacetate decarboxylase (Chromohalobacter salexigens (strain ATCC BAA-138 / DSM 3043 / CIP 106854 / NCIMB 13768 / 1H11)).